The primary structure comprises 339 residues: Ketol-acid reductoisomerase (NADP(+)) (339 aa).

The KARI N-terminal Rossmann domain occupies 1 to 182 (MRVYYDRDAD…GGGRSGVIET (182 aa)). Residues 24 to 27 (YGSQ), R48, S51, T53, and 83 to 86 (DELQ) contribute to the NADP(+) site. Residue H108 is part of the active site. Position 134 (G134) interacts with NADP(+). Residues 183-328 (TFKEECETDL…GKLRAMMPWI (146 aa)) enclose the KARI C-terminal knotted domain. Residues D191, E195, E227, and E231 each coordinate Mg(2+). Substrate is bound at residue S252.

This sequence belongs to the ketol-acid reductoisomerase family. Mg(2+) is required as a cofactor.

It carries out the reaction (2R)-2,3-dihydroxy-3-methylbutanoate + NADP(+) = (2S)-2-acetolactate + NADPH + H(+). The catalysed reaction is (2R,3R)-2,3-dihydroxy-3-methylpentanoate + NADP(+) = (S)-2-ethyl-2-hydroxy-3-oxobutanoate + NADPH + H(+). It functions in the pathway amino-acid biosynthesis; L-isoleucine biosynthesis; L-isoleucine from 2-oxobutanoate: step 2/4. It participates in amino-acid biosynthesis; L-valine biosynthesis; L-valine from pyruvate: step 2/4. Involved in the biosynthesis of branched-chain amino acids (BCAA). Catalyzes an alkyl-migration followed by a ketol-acid reduction of (S)-2-acetolactate (S2AL) to yield (R)-2,3-dihydroxy-isovalerate. In the isomerase reaction, S2AL is rearranged via a Mg-dependent methyl migration to produce 3-hydroxy-3-methyl-2-ketobutyrate (HMKB). In the reductase reaction, this 2-ketoacid undergoes a metal-dependent reduction by NADPH to yield (R)-2,3-dihydroxy-isovalerate. The protein is Ketol-acid reductoisomerase (NADP(+)) of Brucella canis (strain ATCC 23365 / NCTC 10854 / RM-666).